The chain runs to 585 residues: Cytochrome c lysine N-methyltransferase 1 (585 aa).

The SET domain maps to 18–273 (KSLSLKPSTI…KPIEVFISYS (256 aa)). Residues 186-288 (LNLSDIKHLY…FSMLVTYGFT (103 aa)) form an SET-like region.

The protein belongs to the class V-like SAM-binding methyltransferase superfamily.

The protein resides in the cytoplasm. It localises to the cytosol. The catalysed reaction is L-lysyl-[cytochrome c] + S-adenosyl-L-methionine = N(6)-methyl-L-lysyl-[cytochrome c] + S-adenosyl-L-homocysteine + H(+). Its function is as follows. Methyltransferase which mediates trimethylation of 'Lys-78' of cytochrome c (CYC1). This is Cytochrome c lysine N-methyltransferase 1 (CTM1) from Saccharomyces cerevisiae (strain ATCC 204508 / S288c) (Baker's yeast).